The primary structure comprises 444 residues: Serine--tRNA ligase (444 aa).

L-serine is bound at residue 243-245 (TAE). An ATP-binding site is contributed by 274–276 (RSE). Glu-297 contacts L-serine. An ATP-binding site is contributed by 361-364 (EISS). L-serine is bound at residue Ser-397.

This sequence belongs to the class-II aminoacyl-tRNA synthetase family. Type-1 seryl-tRNA synthetase subfamily. As to quaternary structure, homodimer. The tRNA molecule binds across the dimer.

It is found in the cytoplasm. The enzyme catalyses tRNA(Ser) + L-serine + ATP = L-seryl-tRNA(Ser) + AMP + diphosphate + H(+). It catalyses the reaction tRNA(Sec) + L-serine + ATP = L-seryl-tRNA(Sec) + AMP + diphosphate + H(+). It functions in the pathway aminoacyl-tRNA biosynthesis; selenocysteinyl-tRNA(Sec) biosynthesis; L-seryl-tRNA(Sec) from L-serine and tRNA(Sec): step 1/1. Catalyzes the attachment of serine to tRNA(Ser). Is also able to aminoacylate tRNA(Sec) with serine, to form the misacylated tRNA L-seryl-tRNA(Sec), which will be further converted into selenocysteinyl-tRNA(Sec). This is Serine--tRNA ligase from Acidobacterium capsulatum (strain ATCC 51196 / DSM 11244 / BCRC 80197 / JCM 7670 / NBRC 15755 / NCIMB 13165 / 161).